A 424-amino-acid chain; its full sequence is MLDLKYIRENPQEIKEALTKRNNETSIIDEIISFDEERRKLLQQIETLRAQRNQNSKLVAKLKAQKKNDEAEEIIIQGKEISEQIKNLESDLKNIEDNLNYKLLCVPNIPDSGVPVGKDENENLEVRRWGKPREFDFEPKAHWDLGTELNLLDFDRAAKLSGSRFTILKGDIARLELALINFMIDLHTKDHGYTFILPPHLVTKETITSSGQLPKFEDDLYKTSLDQMYLISTAEVSLAGLHRNETLEFNSLPLKYVAYTPCYRREAGSYGKDVRGMIRQHQFDKVELFWYTTPEESSQALEELTSHAEKVLQLLNLPYRVVALCTGDLGFAAAKTYDLEVWLPSYNDYKEISSCSNTKDFQGRRGNIRYRDRENKLNFVHTLNGSGLAVGRTLVAIMENYQTANGKIEIPEKLIPYMGKEFIG.

233–235 (TAE) contacts L-serine. ATP is bound at residue 264–266 (RRE). Glu287 lines the L-serine pocket. Residue 351 to 354 (EISS) coordinates ATP. Position 386 (Ser386) interacts with L-serine.

This sequence belongs to the class-II aminoacyl-tRNA synthetase family. Type-1 seryl-tRNA synthetase subfamily. Homodimer. The tRNA molecule binds across the dimer.

It localises to the cytoplasm. It carries out the reaction tRNA(Ser) + L-serine + ATP = L-seryl-tRNA(Ser) + AMP + diphosphate + H(+). The catalysed reaction is tRNA(Sec) + L-serine + ATP = L-seryl-tRNA(Sec) + AMP + diphosphate + H(+). The protein operates within aminoacyl-tRNA biosynthesis; selenocysteinyl-tRNA(Sec) biosynthesis; L-seryl-tRNA(Sec) from L-serine and tRNA(Sec): step 1/1. In terms of biological role, catalyzes the attachment of serine to tRNA(Ser). Is also able to aminoacylate tRNA(Sec) with serine, to form the misacylated tRNA L-seryl-tRNA(Sec), which will be further converted into selenocysteinyl-tRNA(Sec). This Petrotoga mobilis (strain DSM 10674 / SJ95) protein is Serine--tRNA ligase.